Consider the following 521-residue polypeptide: MDTESQYSGYSYKSGHSRSSRKHRDRRDRHRSKSRDGGRGDKSVTIQAPGEPLLDNESTRGDERDDNWGETTTVVTGTSEHSISHDDLTRIAKDMEDSVPLDCSRHLGVAAGATLALLSFLTPLAFLLLPPLLWREELEPCGTACEGLFISVAFKLLILLLGSWALFFRRPKASLPRVFVLRALLMVLVFLLVVSYWLFYGVRILDARERSYQGVVQFAVSLVDALLFVHYLAVVLLELRQLQPQFTLKVVRSTDGASRFYNVGHLSIQRVAVWILEKYYHDFPVYNPALLNLPKSVLAKKVSGFKVYSLGEENSTNNSTGQSRAVIAAAARRRDNSHNEYYYEEAEHERRVRKRRARLVVAVEEAFTHIKRLQEEEQKNPREVMDPREAAQAIFASMARAMQKYLRTTKQQPYHTMESILQHLEFCITHDMTPKAFLERYLAAGPTIQYHKERWLAKQWTLVSEEPVTNGLKDGIVFLLKRQDFSLVVSTKKVPFFKLSEEFVDPKSHKFVMRLQSETSV.

Residues 1 to 81 (MDTESQYSGY…TTVVTGTSEH (81 aa)) are disordered. The Cytoplasmic segment spans residues 1-108 (MDTESQYSGY…VPLDCSRHLG (108 aa)). Residues 15–33 (GHSRSSRKHRDRRDRHRSK) are compositionally biased toward basic residues. Over residues 57–67 (ESTRGDERDDN) the composition is skewed to basic and acidic residues. Residues 69-81 (GETTTVVTGTSEH) are compositionally biased toward low complexity. The helical transmembrane segment at 109 to 129 (VAAGATLALLSFLTPLAFLLL) threads the bilayer. Over 130–147 (PPLLWREELEPCGTACEG) the chain is Extracellular. The helical transmembrane segment at 148-168 (LFISVAFKLLILLLGSWALFF) threads the bilayer. Topologically, residues 169–178 (RRPKASLPRV) are cytoplasmic. A helical transmembrane segment spans residues 179–199 (FVLRALLMVLVFLLVVSYWLF). Residues 200-217 (YGVRILDARERSYQGVVQ) are Extracellular-facing. The helical transmembrane segment at 218-238 (FAVSLVDALLFVHYLAVVLLE) threads the bilayer. At 239-521 (LRQLQPQFTL…VMRLQSETSV (283 aa)) the chain is on the cytoplasmic side.

Belongs to the Vang family. Homodimer and heterodimer with VANGL1. Interacts through its C-terminal region with the N-terminal half of DVL1, DVL2 and DVL3. The PDZ domain of DVL1, DVL2 and DVL3 is required for the interaction. Also interacts with the PDZ domains of MAGI3, SCRIB/SCRB1 and FZD3. Interacts with PRICKLE3.

It is found in the cell membrane. Functionally, involved in the control of early morphogenesis and patterning of both axial midline structures and the development of neural plate. Plays a role in the regulation of planar cell polarity, particularly in the orientation of stereociliary bundles in the cochlea. Required for polarization and movement of myocardializing cells in the outflow tract and seems to act via RHOA signaling to regulate this process. Required for cell surface localization of FZD3 and FZD6 in the inner ear. This is Vang-like protein 2 (VANGL2) from Homo sapiens (Human).